Here is a 355-residue protein sequence, read N- to C-terminus: Guanine nucleotide-binding protein G(z) subunit alpha (355 aa).

Positions 1–14 (MGCRQSSEEKEAAR) are enriched in basic and acidic residues. The segment at 1-26 (MGCRQSSEEKEAARRSRRIDRHLRSE) is disordered. Gly-2 carries N-myristoyl glycine lipidation. Cys-3 is lipidated: S-palmitoyl cysteine. A G-alpha domain is found at 32–355 (REIKLLLLGT…QNNLKYIGLC (324 aa)). Positions 35–48 (KLLLLGTSNSGKST) are G1 motif. GTP contacts are provided by residues 40–47 (GTSNSGKS), 176–182 (LRSRDMT), 201–205 (DVGGQ), 270–273 (NKKD), and Ala-327. Positions 47 and 182 each coordinate Mg(2+). Residues 174 to 182 (DILRSRDMT) form a G2 motif region. Residues 197–206 (FKMVDVGGQR) form a G3 motif region. The G4 motif stretch occupies residues 266–273 (ILFLNKKD). The segment at 325–330 (TCATDT) is G5 motif.

This sequence belongs to the G-alpha family. G(i/o/t/z) subfamily. G-proteins are composed of 3 units; alpha, beta and gamma. The alpha chain contains the guanine nucleotide binding site. Interacts with ADGRB2.

The protein resides in the membrane. Guanine nucleotide-binding proteins (G proteins) are involved as modulators or transducers in various transmembrane signaling systems. The protein is Guanine nucleotide-binding protein G(z) subunit alpha (Gnaz) of Rattus norvegicus (Rat).